The following is a 309-amino-acid chain: Mitochondrial phosphate carrier protein 1, mitochondrial (309 aa).

The Mitochondrial intermembrane segment spans residues 1–15 (MTRVKSKLDEELSSP). The helical transmembrane segment at 16–36 (WFYTVCTMGGMLSAGTTHLAI) threads the bilayer. Solcar repeat units follow at residues 16–100 (WFYT…FKTL), 109–193 (NRTS…SVEF), and 210–289 (QQLG…IKVL). The Mitochondrial matrix portion of the chain corresponds to 37–74 (TPLDVLKVNMQVNPVKYNSIPSGFSTLLREHGHSYLWR). A helical membrane pass occupies residues 75–94 (GWSGKLLGYGVQGGCRFGLY). At 95-111 (EYFKTLYSDVLPNHNRT) the chain is on the mitochondrial intermembrane side. A helical membrane pass occupies residues 112–132 (SIYFLSSASAQIFADMALCPF). The Mitochondrial matrix segment spans residues 133-167 (EAIKVRVQTQPMFAKGLLDGFPRVYRSEGLAGFHR). Residues 168-187 (GLFPLWCRNLPFSMVMFSTF) traverse the membrane as a helical segment. Topologically, residues 188-208 (EQSVEFIYQKIIQKRKQDCSK) are mitochondrial intermembrane. A helical membrane pass occupies residues 209 to 229 (AQQLGVTCLAGYTAGAVGTII). Over 230 to 268 (SNPADVVLSSLYNNKAKNVLQAVRNIGFVGLFTRSLPVR) the chain is Mitochondrial matrix. Residues 269–289 (ITIVGPVITLQWFFYDAIKVL) traverse the membrane as a helical segment. Residues 290-309 (SGFPTSGGVKKPVDAAKLSV) lie on the Mitochondrial intermembrane side of the membrane.

Belongs to the mitochondrial carrier (TC 2.A.29) family. Expressed in stems, leaves and flowers. Strong expression in the stamens of flowers.

The protein localises to the mitochondrion inner membrane. Functionally, transport of phosphate groups from the cytosol to the mitochondrial matrix. Mediates salt stress tolerance through an ATP-dependent pathway and via modulation of the gibberellin metabolism. The sequence is that of Mitochondrial phosphate carrier protein 1, mitochondrial (MPT1) from Arabidopsis thaliana (Mouse-ear cress).